Reading from the N-terminus, the 464-residue chain is GDNF family receptor alpha-2 (464 aa).

Positions 1–21 (MILANVFCLFFFLDETLRSLA) are cleaved as a signal peptide. Intrachain disulfides connect cysteine 40–cysteine 93, cysteine 47–cysteine 53, cysteine 63–cysteine 78, cysteine 95–cysteine 105, cysteine 161–cysteine 222, cysteine 168–cysteine 174, cysteine 185–cysteine 200, cysteine 195–cysteine 241, cysteine 224–cysteine 229, cysteine 251–cysteine 323, cysteine 258–cysteine 264, cysteine 275–cysteine 293, cysteine 285–cysteine 347, and cysteine 325–cysteine 335. N-linked (GlcNAc...) asparagine glycosylation occurs at asparagine 52. N-linked (GlcNAc...) asparagine glycans are attached at residues asparagine 357 and asparagine 413. The GPI-anchor amidated serine moiety is linked to residue serine 444. Positions 445–464 (RARPSAALTVLSVLMLKLAL) are cleaved as a propeptide — removed in mature form.

This sequence belongs to the GDNFR family. In terms of assembly, interacts with NRTN ligand and RET: forms a 2:2:2 ternary complex composed of NRTN ligand, GFRA2 and RET receptor. Also forms a 4:4:4 tetrameric complex composed of 4 copies of NRTN ligand, GFRA2 and RET receptor, which prevents endocytosis of RET. Interacts with SORL1.

The protein resides in the cell membrane. In terms of biological role, receptor for neurturin (NRTN), a growth factor that supports the survival of sympathetic neurons. NRTN-binding leads to autophosphorylation and activation of the RET receptor. Also able to mediate GDNF signaling through the RET tyrosine kinase receptor. The sequence is that of GDNF family receptor alpha-2 (GFRA2) from Pongo abelii (Sumatran orangutan).